We begin with the raw amino-acid sequence, 197 residues long: Protein jagunal (197 aa).

The Cytoplasmic portion of the chain corresponds to 1-39 (MATRGGPMVAGTDGNDFEFRQRVAGTYQISLLNKSRLKY). The chain crosses the membrane as a helical span at residues 40–60 (CIFFHALLFFVMLAKLTSDIL). Topologically, residues 61–78 (DHLDIFVLEIEELEVPPP) are lumenal. A helical transmembrane segment spans residues 79-99 (LWWEYVWAASLLTSFLGLSAA). The Cytoplasmic portion of the chain corresponds to 100–109 (RGNKVREMQK). A helical membrane pass occupies residues 110 to 130 (YMVAILLFAILPLFYCFAYYF). The Lumenal portion of the chain corresponds to 131 to 159 (SDVWEFATLDKSVELDETDIFVWRGYPYG). The helical transmembrane segment at 160–180 (VFWYAFCFVGFQVHGFTLYFA) threads the bilayer. The Cytoplasmic segment spans residues 181–197 (YNLVKAWKARTATRKFQ).

It belongs to the jagunal family.

Its subcellular location is the endoplasmic reticulum membrane. Its function is as follows. Required for endoplasmic reticulum organization and proper vesicular traffic during vitellogenesis. Required for oocyte and bristle growth. This chain is Protein jagunal, found in Drosophila melanogaster (Fruit fly).